The sequence spans 388 residues: MAQREWVEKDFYKELGVSSDASPEEIKRAYRKLARYLHPDANPDNSAGERFKVVSEAHNVLSDPVKRKEYDETRRLFAGGWLGGRRFDSSFGDFGMGGDGAEFNLNDLFDAASRTGGTNIGDLFGGLFGRGASVRPSRPRRGNDLETEADLDFVEAAKGVAMPLRLTSPAPCTNCHGSGARPGISPKVCSTCNGSGVINRNQGAFGFSEPCTECRGSGSIIEHPCEECKGTGVTTRTRTINVRIPSGVEDGQRIRLAGQGEAGLRGAPSGDLYVTVHVRPDKIFGRNGDDLTVTIPVSFTELALGSTLSVPTLDGTVGVRVPKGTSDGRILRVRGRGVPKRSGGHGDLLVTVKVAVPLNLEGAAQKALEAYAAAERSSGFNPRAGWGR.

The J domain maps to 10–74 (DFYKELGVSS…VKRKEYDETR (65 aa)). The segment at 159 to 237 (GVAMPLRLTS…CKGTGVTTRT (79 aa)) adopts a CR-type zinc-finger fold. Cys-172, Cys-175, Cys-189, Cys-192, Cys-211, Cys-214, Cys-225, and Cys-228 together coordinate Zn(2+). CXXCXGXG motif repeat units lie at residues 172 to 179 (CTNCHGSG), 189 to 196 (CSTCNGSG), 211 to 218 (CTECRGSG), and 225 to 232 (CEECKGTG).

The protein belongs to the DnaJ family. In terms of assembly, homodimer. Zn(2+) is required as a cofactor.

Its subcellular location is the cytoplasm. In terms of biological role, participates actively in the response to hyperosmotic and heat shock by preventing the aggregation of stress-denatured proteins and by disaggregating proteins, also in an autonomous, DnaK-independent fashion. Unfolded proteins bind initially to DnaJ; upon interaction with the DnaJ-bound protein, DnaK hydrolyzes its bound ATP, resulting in the formation of a stable complex. GrpE releases ADP from DnaK; ATP binding to DnaK triggers the release of the substrate protein, thus completing the reaction cycle. Several rounds of ATP-dependent interactions between DnaJ, DnaK and GrpE are required for fully efficient folding. Also involved, together with DnaK and GrpE, in the DNA replication of plasmids through activation of initiation proteins. This is Chaperone protein DnaJ 1 from Mycobacterium leprae (strain TN).